Reading from the N-terminus, the 291-residue chain is Small ribosomal subunit biogenesis GTPase RsgA (291 aa).

The CP-type G domain occupies 63-221; it reads ENELKRPPVS…IADTPGFSAL (159 aa). GTP-binding positions include 112–115 and 164–172; these read TKKD and GQSGVGKST. Cysteine 245, cysteine 250, histidine 252, and cysteine 258 together coordinate Zn(2+).

Belongs to the TRAFAC class YlqF/YawG GTPase family. RsgA subfamily. As to quaternary structure, monomer. Associates with 30S ribosomal subunit, binds 16S rRNA. Zn(2+) is required as a cofactor.

The protein resides in the cytoplasm. Its function is as follows. One of several proteins that assist in the late maturation steps of the functional core of the 30S ribosomal subunit. Helps release RbfA from mature subunits. May play a role in the assembly of ribosomal proteins into the subunit. Circularly permuted GTPase that catalyzes slow GTP hydrolysis, GTPase activity is stimulated by the 30S ribosomal subunit. The protein is Small ribosomal subunit biogenesis GTPase RsgA of Staphylococcus aureus (strain COL).